Reading from the N-terminus, the 410-residue chain is Peptidase T (410 aa).

H78 is a Zn(2+) binding site. D80 is an active-site residue. D140 serves as a coordination point for Zn(2+). The Proton acceptor role is filled by E173. Zn(2+)-binding residues include E174, D196, and H379.

Belongs to the peptidase M20B family. Requires Zn(2+) as cofactor.

Its subcellular location is the cytoplasm. It catalyses the reaction Release of the N-terminal residue from a tripeptide.. In terms of biological role, cleaves the N-terminal amino acid of tripeptides. This Pectobacterium carotovorum subsp. carotovorum (strain PC1) protein is Peptidase T.